We begin with the raw amino-acid sequence, 474 residues long: Aspartyl/glutamyl-tRNA(Asn/Gln) amidotransferase subunit B (474 aa).

This sequence belongs to the GatB/GatE family. GatB subfamily. As to quaternary structure, heterotrimer of A, B and C subunits.

It catalyses the reaction L-glutamyl-tRNA(Gln) + L-glutamine + ATP + H2O = L-glutaminyl-tRNA(Gln) + L-glutamate + ADP + phosphate + H(+). It carries out the reaction L-aspartyl-tRNA(Asn) + L-glutamine + ATP + H2O = L-asparaginyl-tRNA(Asn) + L-glutamate + ADP + phosphate + 2 H(+). Its function is as follows. Allows the formation of correctly charged Asn-tRNA(Asn) or Gln-tRNA(Gln) through the transamidation of misacylated Asp-tRNA(Asn) or Glu-tRNA(Gln) in organisms which lack either or both of asparaginyl-tRNA or glutaminyl-tRNA synthetases. The reaction takes place in the presence of glutamine and ATP through an activated phospho-Asp-tRNA(Asn) or phospho-Glu-tRNA(Gln). This chain is Aspartyl/glutamyl-tRNA(Asn/Gln) amidotransferase subunit B, found in Limosilactobacillus reuteri (strain DSM 20016) (Lactobacillus reuteri).